The primary structure comprises 282 residues: Nucleotide-binding protein XCV3122 (282 aa).

5–12 lines the ATP pocket; the sequence is GLSGSGKS. 57-60 contributes to the GTP binding site; the sequence is DVRS.

This sequence belongs to the RapZ-like family.

Displays ATPase and GTPase activities. The sequence is that of Nucleotide-binding protein XCV3122 from Xanthomonas euvesicatoria pv. vesicatoria (strain 85-10) (Xanthomonas campestris pv. vesicatoria).